The chain runs to 73 residues: UPF0435 protein BH2488 (73 aa).

This sequence belongs to the UPF0435 family.

The protein is UPF0435 protein BH2488 of Halalkalibacterium halodurans (strain ATCC BAA-125 / DSM 18197 / FERM 7344 / JCM 9153 / C-125) (Bacillus halodurans).